Consider the following 445-residue polypeptide: Lateral flagellar hook-associated protein 2 (445 aa).

A coiled-coil region spans residues 388-423; that stretch reads SGAFKSRKEALQANLDRLSDKQTTLERKYDMSYKRY.

This sequence belongs to the FliD family. Homopentamer.

Its subcellular location is the secreted. It localises to the bacterial flagellum. In terms of biological role, required for the morphogenesis and for the elongation of the flagellar filament by facilitating polymerization of the flagellin monomers at the tip of growing filament. Forms a capping structure, which prevents flagellin subunits (transported through the central channel of the flagellum) from leaking out without polymerization at the distal end. Essential for swarming motility. In Vibrio parahaemolyticus serotype O3:K6 (strain RIMD 2210633), this protein is Lateral flagellar hook-associated protein 2 (fliDL).